Reading from the N-terminus, the 249-residue chain is Probable transcriptional regulatory protein MXAN_4974 (249 aa).

It belongs to the TACO1 family.

The protein localises to the cytoplasm. The polypeptide is Probable transcriptional regulatory protein MXAN_4974 (Myxococcus xanthus (strain DK1622)).